The sequence spans 459 residues: Inositol-trisphosphate 3-kinase A (459 aa).

Residues 1–26 form a disordered region; it reads MTLPGHPTGMARPRGAGPCSPGLERA. Arginine 35, arginine 55, and arginine 62 each carry omega-N-methylarginine. The tract at residues 49–164 is disordered; the sequence is AAAGEPRARG…TSEDVGQKSH (116 aa). Positions 116 to 132 are enriched in low complexity; sequence RRLSTSSLSSTGSSSLL. Phosphoserine occurs at positions 135 and 195. ATP is bound by residues serine 195, lysine 207, 247–249, and aspartate 260; that span reads QDL. Substrate contacts are provided by lysine 262 and arginine 283. Positions 285–293 are calmodulin-binding; it reads DMYKKMLAV. Position 310–317 (310–317) interacts with substrate; the sequence is KPRYMQWR. ATP-binding residues include lysine 334 and aspartate 414. Lysine 417 serves as a coordination point for substrate.

Belongs to the inositol phosphokinase (IPK) family.

Its subcellular location is the cytoplasm. The protein localises to the cytoskeleton. It catalyses the reaction 1D-myo-inositol 1,4,5-trisphosphate + ATP = 1D-myo-inositol 1,3,4,5-tetrakisphosphate + ADP + H(+). Its activity is regulated as follows. Activated by calcium/calmodulin. In terms of biological role, catalyzes the phosphorylation of 1D-myo-inositol 1,4,5-trisphosphate (InsP3) into 1D-myo-inositol 1,3,4,5-tetrakisphosphate and participates to the regulation of calcium homeostasis. The chain is Inositol-trisphosphate 3-kinase A from Rattus norvegicus (Rat).